A 407-amino-acid chain; its full sequence is tRNA (guanine-N(7)-)-methyltransferase non-catalytic subunit wuho (407 aa).

3 WD repeats span residues 83 to 124, 171 to 210, and 214 to 252; these read AIEV…ARLL, GHLS…DIHS, and GHKE…ELLI.

It belongs to the WD repeat TRM82 family. Forms a heterodimer with the catalytic subunit Mettl1. Interacts with mei-P26 and weakly interacts with bgcn; required for the function or formation of the mei-P26-bgcn-bam-sxl complex. Interacts with nanos; may be involved in mei-P26-dependent derepression of the BMP signaling pathway. Interacts with Myc; the interaction may be mediated by mei-P26 and may be involved in the regulation of ribosome biogenesis. In terms of tissue distribution, in testis, it is present at high level in hub cells, a niche for germline stem cells of testis. Ubiquitously expressed in all testicular cells throughout spermatogenesis. Ubiquitously expressed in all germline and somatic cells of the ovary.

It is found in the nucleus. The protein localises to the cytoplasm. It participates in tRNA modification; N(7)-methylguanine-tRNA biosynthesis. In terms of biological role, required for the Mettl1-dependent formation of N(7)-methylguanine at position 46 (m7G46) in tRNA. In the Mettl1-wuho methyltransferase complex, it is required to stabilize and induce conformational changes of the catalytic subunit. Required for binding of nanos mRNA and repression of translation by the mei-P26-bgcn-bam-sxl complex. May cooperate with mei-P26 and nanos to derepress the BMP signaling pathway. May cooperate with mei-P26 to suppress expression of a subset of microRNAs. May cooperate with mei-P26 to regulate bam expression levels in germline cells during gametogenesis. Required to promote mitosis to meiosis transition during gametogenesis. May regulate germline cell division in part by regulating ribosome biogenesis. The sequence is that of tRNA (guanine-N(7)-)-methyltransferase non-catalytic subunit wuho from Drosophila ananassae (Fruit fly).